Here is a 626-residue protein sequence, read N- to C-terminus: SHC-transforming protein 4 (626 aa).

The segment at 1–185 is CH2; sequence MRERSQDSQA…KQDGPPLQHL (185 aa). Disordered regions lie at residues 38–76 and 119–182; these read ITSLDEGSPGGSVGNKGSSPPPYPALAPHLPTEDATVSS and LQEN…GPPL. The segment covering 120–139 has biased composition (polar residues); sequence QENQDQTPSRPASPESNLNR. The PID domain occupies 186-369; it reads LGNGLNYCVR…LVDGAPEDRD (184 aa). Positions 370 to 521 are CH1; the sequence is HDYYNSIPGK…HIRQQLWDEE (152 aa). At Tyr422 the chain carries Phosphotyrosine. Positions 522-613 constitute an SH2 domain; that stretch reads CFHGKLSRGA…GSEVRLKQPI (92 aa).

In terms of assembly, interacts (via PID domain) with phosphorylated MUSK (via NPXY motif); undergoes tyrosine phosphorylation downstream of activated MUSK. Interacts with GRB2; the interaction is dependent of Tyr-422 phosphorylation and increased by EGF. Phosphorylated; the phosphorylation is enhanced by EGF. Phosphorylation at Tyr-422 is required for the interaction with GRB2. Expressed in both brain and skeletal muscle; widely expressed in brain namely olfactory bulb, cortex, hippocampus, striatum, thalamus, and brain stem (at protein level). Only expressed in melanomas. Weakly expressed in normal melanocytes and benign nevi. Highly expressed at the transition from radial growth phase to vertical growth phase and metastatic melanomas, when tumor cells acquire migratory competence and invasive potential.

The protein localises to the postsynaptic cell membrane. Its function is as follows. Activates both Ras-dependent and Ras-independent migratory pathways in melanomas. Contributes to the early phases of agrin-induced tyrosine phosphorylation of CHRNB1. This Mus musculus (Mouse) protein is SHC-transforming protein 4 (Shc4).